The primary structure comprises 239 residues: Probable replication-associated protein repA2 (239 aa).

This sequence belongs to the IncFII RepA family.

In terms of biological role, this protein is essential for plasmid replication; it is involved in copy control functions. The protein is Probable replication-associated protein repA2 (repA2) of Buchnera aphidicola subsp. Baizongia pistaciae (strain Bp).